Reading from the N-terminus, the 183-residue chain is Large ribosomal subunit protein eL18 (183 aa).

Residues 146-183 (HFGPAPGVPHSHTKPYVRSKGRKFEKARGRRKSRGFRV) are disordered. Composition is skewed to basic residues over residues 156–166 (SHTKPYVRSKG) and 173–183 (RGRRKSRGFRV).

This sequence belongs to the eukaryotic ribosomal protein eL18 family.

The chain is Large ribosomal subunit protein eL18 (RPL18) from Cicer arietinum (Chickpea).